Reading from the N-terminus, the 388-residue chain is MEQQEPGATLDDGMDSFLEKFQSQPYRGGFHESQWEEEFEKIPLFMKNSPSEIDPLENPDLACLQSIIFDEERSPEDQARTYKDEGNDYFKEKDYKKAVISYTEGLKKKCADPDLNAVLYTNRAAAQYYLGNFRSSLNDVTAARKLKPCHLKAIIRGASCHLELKNYVEAVNWCDEGLQIDATEKKLLDLRAKADKLKRTEQRDVRKAKLKEKKQQDQNEALLQAIKARNIRLVAEAAGEDEDSASEGLSELVLYGLSSENPCGARLGVDDQGRLSWPVLFLYPEYAQSDLVSAFHEDSRFIDHLMVMFGETPSWDLEQKYCPDNLEVYFEDEDRAELYCVPPSSTLLQVLQHPRYFVKALTPTFLVCVGSSGFCRNYLRGKKVHQVK.

N-acetylmethionine is present on M1. Phosphoserine is present on S51. TPR repeat units lie at residues 79–112 (ARTY…KCAD), 117–150 (AVLY…KPCH), and 151–184 (LKAI…DATE). A Phosphoserine modification is found at S244.

It belongs to the TTC4 family. Interacts (via TPR repeats) with HSP90AB1. Interacts with HSPA8, CDC6, TBK1 and MSL1.

Its subcellular location is the nucleus. It localises to the nucleoplasm. The protein localises to the cytoplasm. May act as a co-chaperone for HSP90AB1. This is Tetratricopeptide repeat protein 4 (TTC4) from Bos taurus (Bovine).